The primary structure comprises 199 residues: ATP-dependent Clp protease proteolytic subunit (199 aa).

The active-site Nucleophile is the Ser-98. His-123 is an active-site residue.

This sequence belongs to the peptidase S14 family. In terms of assembly, fourteen ClpP subunits assemble into 2 heptameric rings which stack back to back to give a disk-like structure with a central cavity, resembling the structure of eukaryotic proteasomes.

Its subcellular location is the cytoplasm. It carries out the reaction Hydrolysis of proteins to small peptides in the presence of ATP and magnesium. alpha-casein is the usual test substrate. In the absence of ATP, only oligopeptides shorter than five residues are hydrolyzed (such as succinyl-Leu-Tyr-|-NHMec, and Leu-Tyr-Leu-|-Tyr-Trp, in which cleavage of the -Tyr-|-Leu- and -Tyr-|-Trp bonds also occurs).. Its function is as follows. Cleaves peptides in various proteins in a process that requires ATP hydrolysis. Has a chymotrypsin-like activity. Plays a major role in the degradation of misfolded proteins. This is ATP-dependent Clp protease proteolytic subunit from Clostridium botulinum (strain Eklund 17B / Type B).